The sequence spans 223 residues: Putative germin-like protein 2-2 (223 aa).

An N-terminal signal peptide occupies residues 1–28; the sequence is MAAVGACFLQQLAVVALLALWCSHGAIA. Cysteines 38 and 53 form a disulfide. In terms of domain architecture, Cupin type-1 spans 67-217; it reads SGLHMAGNTT…AFQVDKNIID (151 aa). 2 N-linked (GlcNAc...) asparagine glycosylation sites follow: Asn-74 and Asn-82. Mn(2+) contacts are provided by His-115, His-117, Glu-122, and His-163. Asn-168 carries an N-linked (GlcNAc...) asparagine glycan.

It belongs to the germin family. As to quaternary structure, oligomer (believed to be a pentamer but probably hexamer).

It localises to the secreted. It is found in the extracellular space. Its subcellular location is the apoplast. In terms of biological role, may play a role in plant defense. Probably has no oxalate oxidase activity even if the active site is conserved. The polypeptide is Putative germin-like protein 2-2 (Oryza sativa subsp. japonica (Rice)).